The chain runs to 634 residues: RNA polymerase sigma factor RpoD (634 aa).

Residues 177 to 202 (LHDETPENDEENSSETEGEEHEDNHL) form a disordered region. Over residues 182–197 (PENDEENSSETEGEEH) the composition is skewed to acidic residues. Residues 385–455 (MIEANLRLVI…TRAIADQART (71 aa)) form a sigma-70 factor domain-2 region. Positions 409–412 (DLIQ) match the Interaction with polymerase core subunit RpoC motif. Residues 464 to 541 (ETINKILRTS…DKNAVAPIDA (78 aa)) form a sigma-70 factor domain-3 region. The sigma-70 factor domain-4 stretch occupies residues 554–607 (VLATLTPREERVLRMRFGIGMNTDHTLEEVGQQFKVTRERIRQIESKALRKLQH). The H-T-H motif DNA-binding region spans 580–599 (LEEVGQQFKVTRERIRQIES). A disordered region spans residues 608–634 (PIRSKKLNSFRSGGKRGDGNSSDLLEA).

This sequence belongs to the sigma-70 factor family. RpoD/SigA subfamily. Interacts transiently with the RNA polymerase catalytic core.

It localises to the cytoplasm. Its function is as follows. Sigma factors are initiation factors that promote the attachment of RNA polymerase to specific initiation sites and are then released. This sigma factor is the primary sigma factor during exponential growth. The protein is RNA polymerase sigma factor RpoD of Rickettsia conorii (strain ATCC VR-613 / Malish 7).